Here is a 527-residue protein sequence, read N- to C-terminus: Phosphoenolpyruvate carboxykinase (ATP) (527 aa).

Substrate contacts are provided by arginine 54, tyrosine 190, and lysine 196. ATP is bound by residues lysine 196, histidine 215, and 231 to 239 (GLSGTGKTT). Positions 196 and 215 each coordinate Mn(2+). Aspartate 252 contacts Mn(2+). Residues glutamate 280, arginine 317, 436 to 437 (RI), and threonine 442 contribute to the ATP site. Arginine 317 serves as a coordination point for substrate.

The protein belongs to the phosphoenolpyruvate carboxykinase (ATP) family. The cofactor is Mn(2+).

Its subcellular location is the cytoplasm. It catalyses the reaction oxaloacetate + ATP = phosphoenolpyruvate + ADP + CO2. The protein operates within carbohydrate biosynthesis; gluconeogenesis. In terms of biological role, involved in the gluconeogenesis. Catalyzes the conversion of oxaloacetate (OAA) to phosphoenolpyruvate (PEP) through direct phosphoryl transfer between the nucleoside triphosphate and OAA. In Oceanobacillus iheyensis (strain DSM 14371 / CIP 107618 / JCM 11309 / KCTC 3954 / HTE831), this protein is Phosphoenolpyruvate carboxykinase (ATP).